The following is a 464-amino-acid chain: tRNA modification GTPase MnmE (464 aa).

Residues R26, E92, and R131 each contribute to the (6S)-5-formyl-5,6,7,8-tetrahydrofolate site. In terms of domain architecture, TrmE-type G spans 227 to 385 (GIKVAILGRV…LISALKDYVS (159 aa)). N237 is a K(+) binding site. Residues 237 to 242 (NAGKSS), 256 to 262 (SNIAGTT), and 281 to 284 (DTAG) each bind GTP. S241 provides a ligand contact to Mg(2+). K(+) is bound by residues S256, I258, and T261. T262 contacts Mg(2+). K464 is a (6S)-5-formyl-5,6,7,8-tetrahydrofolate binding site.

The protein belongs to the TRAFAC class TrmE-Era-EngA-EngB-Septin-like GTPase superfamily. TrmE GTPase family. In terms of assembly, homodimer. Heterotetramer of two MnmE and two MnmG subunits. K(+) is required as a cofactor.

The protein resides in the cytoplasm. Exhibits a very high intrinsic GTPase hydrolysis rate. Involved in the addition of a carboxymethylaminomethyl (cmnm) group at the wobble position (U34) of certain tRNAs, forming tRNA-cmnm(5)s(2)U34. The chain is tRNA modification GTPase MnmE from Brachyspira hyodysenteriae (strain ATCC 49526 / WA1).